We begin with the raw amino-acid sequence, 1503 residues long: EF-hand calcium-binding domain-containing protein 5 (1503 aa).

The interval 1-23 (MNESASQEELRPAQENRKEDKER) is disordered. A compositionally biased stretch (basic and acidic residues) spans 8–23 (EELRPAQENRKEDKER). At Ser77 the chain carries Phosphoserine. 3 disordered regions span residues 477 to 518 (ASKT…EQGP), 544 to 656 (IEPG…QGPY), and 730 to 750 (FPET…KSQK). The segment covering 549-561 (HTESTLEQGSSRR) has biased composition (polar residues). Composition is skewed to basic and acidic residues over residues 562–582 (LLTE…HKGS) and 607–622 (GSRR…HKGS). Positions 869–904 (RQRLLLEAIFQKWDSDGSGFLDLKEVDELLYTYKEG) constitute an EF-hand domain. Residues Asp882, Asp884, Ser886, and Glu893 each coordinate Ca(2+).

The sequence is that of EF-hand calcium-binding domain-containing protein 5 (EFCAB5) from Homo sapiens (Human).